A 265-amino-acid polypeptide reads, in one-letter code: Chlorophyll a-b binding protein 1C, chloroplastic (265 aa).

The transit peptide at 1–34 (MAAATMALSSPSFAGQAVKLSPSASEISGNGRIT) directs the protein to the chloroplast. A helical transmembrane segment spans residues 151–171 (LVHAQSILAIWACQVVLMGAV). 6 residues coordinate chlorophyll b: V152, S156, Q164, E172, R175, and L181. Positions 212, 213, 216, 218, 230, 245, and 254 each coordinate chlorophyll a. A helical membrane pass occupies residues 219-239 (LAMFSMFGFFVQAIVTGKGPL). F261 contacts chlorophyll b.

This sequence belongs to the light-harvesting chlorophyll a/b-binding (LHC) protein family. In terms of assembly, the LHC complex consists of chlorophyll a-b binding proteins. The cofactor is Binds at least 14 chlorophylls (8 Chl-a and 6 Chl-b) and carotenoids such as lutein and neoxanthin.. In terms of processing, photoregulated by reversible phosphorylation of its threonine residues.

The protein resides in the plastid. Its subcellular location is the chloroplast thylakoid membrane. In terms of biological role, the light-harvesting complex (LHC) functions as a light receptor, it captures and delivers excitation energy to photosystems with which it is closely associated. The protein is Chlorophyll a-b binding protein 1C, chloroplastic (CAB1C) of Solanum lycopersicum (Tomato).